The chain runs to 382 residues: Mannitol-1-phosphate 5-dehydrogenase (382 aa).

3–14 (AVHFGAGNIGRG) serves as a coordination point for NAD(+).

It belongs to the mannitol dehydrogenase family.

It catalyses the reaction D-mannitol 1-phosphate + NAD(+) = beta-D-fructose 6-phosphate + NADH + H(+). The polypeptide is Mannitol-1-phosphate 5-dehydrogenase (mtlD) (Geobacillus stearothermophilus (Bacillus stearothermophilus)).